The sequence spans 178 residues: Ribosome maturation factor RimM (178 aa).

Residues 99–178 (QGEFYWRDLI…EITVDWDPGF (80 aa)) enclose the PRC barrel domain.

The protein belongs to the RimM family. Binds ribosomal protein uS19.

It is found in the cytoplasm. Functionally, an accessory protein needed during the final step in the assembly of 30S ribosomal subunit, possibly for assembly of the head region. Essential for efficient processing of 16S rRNA. May be needed both before and after RbfA during the maturation of 16S rRNA. It has affinity for free ribosomal 30S subunits but not for 70S ribosomes. The protein is Ribosome maturation factor RimM of Pseudoalteromonas translucida (strain TAC 125).